The sequence spans 354 residues: Ubiquitin-conjugating enzyme E2 Z (354 aa).

The disordered stretch occupies residues 1–21; sequence MAESPTEEAATAGAGAAGPGA. One can recognise a UBC core domain in the interval 99 to 253; that stretch reads QCLLRIKRDI…IRHETIRVAV (155 aa). C188 acts as the Glycyl thioester intermediate in catalysis. The segment at 332-354 is disordered; the sequence is NAEMDSDSSSSGTETDLHGSLRV. Position 337 is a phosphoserine (S337).

It belongs to the ubiquitin-conjugating enzyme family. In terms of tissue distribution, widely expressed. Highly in placenta, pancreas, spleen and testis.

The protein localises to the cytoplasm. It localises to the nucleus. The catalysed reaction is S-ubiquitinyl-[E1 ubiquitin-activating enzyme]-L-cysteine + [E2 ubiquitin-conjugating enzyme]-L-cysteine = [E1 ubiquitin-activating enzyme]-L-cysteine + S-ubiquitinyl-[E2 ubiquitin-conjugating enzyme]-L-cysteine.. Its pathway is protein modification; protein ubiquitination. Its function is as follows. Catalyzes the covalent attachment of ubiquitin to other proteins. Specific substrate for UBA6, not charged with ubiquitin by UBE1. May be involved in apoptosis regulation. The protein is Ubiquitin-conjugating enzyme E2 Z (UBE2Z) of Homo sapiens (Human).